The primary structure comprises 127 residues: MLKPRITARQLIWISAFLLMLTILMMTWSTLRQQESTLAIRAVNLGASMPDGFSVLHHLDANGIHFKSITPKNDMLLITFDSPAQSAAAKTVLDQTLPHGYVVAQQDDDNETVQWLSRLRESSHRFG.

Topologically, residues 1-10 (MLKPRITARQ) are cytoplasmic. Residues 11–31 (LIWISAFLLMLTILMMTWSTL) traverse the membrane as a helical segment. At 32–127 (RQQESTLAIR…RLRESSHRFG (96 aa)) the chain is on the periplasmic side.

It belongs to the MzrA family. In terms of assembly, interacts with EnvZ.

Its subcellular location is the cell inner membrane. In terms of biological role, modulates the activity of the EnvZ/OmpR two-component regulatory system, probably by directly modulating EnvZ enzymatic activity and increasing stability of phosphorylated OmpR. The sequence is that of Modulator protein MzrA from Salmonella agona (strain SL483).